Consider the following 362-residue polypeptide: MANDERVATGEDRAWGRLGVAELRIDAASVAPNDPTEDREVVLPIPGPAVSPIPRLTQPPRSSPPRPDAPSDLPRAQREPTKRSPATAGPTEDPNFADKIFKQAAPARKKPRFMPPPKLICGGVTDVTAELPAPSWDRVAEEFGIPDSWKNILAPLVETQRFAKTLQSYNGAKKSGNVLPSQDQIFAWARYCAPHEVKVIIVGQDPYPTEGDAHGLAFSVPVGRRVPPSLRRVFAALKDCYGDGFPTPSSGSLIAWAKQGVLLLNRHLTVERGLPRSHVSMGWDKLTFGVIKTLANDNPRMAVMLWGYDAKTFVPKLPSKHLRLEYSHPSTSTRRPFDCRHFIEANKFLEEGGLQAVVWRLP.

Positions 28-97 are disordered; it reads ASVAPNDPTE…AGPTEDPNFA (70 aa). The active-site Proton acceptor is the aspartate 205.

The protein belongs to the uracil-DNA glycosylase (UDG) superfamily. UNG family.

Its subcellular location is the host nucleus. It catalyses the reaction Hydrolyzes single-stranded DNA or mismatched double-stranded DNA and polynucleotides, releasing free uracil.. Its function is as follows. Excises uracil residues from the DNA which can arise as a result of misincorporation of dUMP residues by DNA polymerase or deamination of cytosines. Therefore may reduce deleterious uracil incorporation into the viral genome, particularly in terminally differentiated cells which lack DNA repair enzymes. This Psittacid herpesvirus 1 (isolate Amazon parrot/-/97-0001/1997) (PsHV-1) protein is Uracil-DNA glycosylase (UL2).